Here is a 214-residue protein sequence, read N- to C-terminus: DNA-directed RNA polymerase subunit alpha (214 aa).

This sequence belongs to the RNA polymerase alpha chain family. In terms of assembly, in plastids the minimal PEP RNA polymerase catalytic core is composed of four subunits: alpha, beta, beta', and beta''. When a (nuclear-encoded) sigma factor is associated with the core the holoenzyme is formed, which can initiate transcription.

The protein resides in the plastid. It is found in the chloroplast. It catalyses the reaction RNA(n) + a ribonucleoside 5'-triphosphate = RNA(n+1) + diphosphate. In terms of biological role, DNA-dependent RNA polymerase catalyzes the transcription of DNA into RNA using the four ribonucleoside triphosphates as substrates. This Euglena viridis (Cercaria viridis) protein is DNA-directed RNA polymerase subunit alpha (rpoA).